The primary structure comprises 713 residues: MLSALPLLFLLLGGALARPDRITFPRSACEAPPAVLSEVQGTLQRPLGRDSRSSPANCTWVILGSKDQTVTVRFQKLHLACGSEHLILHSPLQPPISLCEAPSGPLQLPGGNVTITYSYAGARAPMGQGFLLTYSQDWLLCLQEEFQCLNHRCIPAAQRCDGIDACGDGSDEAGCSSDPFPNLNPAPAPTLACNLTLEDFYGVFSSPGYSHLASVSHPQSCLWLLDPHDGRRLAVRFTALDLSYGDAVHVYDGAGPPETPRLLRSLTHFSNGKAVTVETLSGQAVVSYHTVAWSSGRGFNATYHVRGYCLPWDRPCGLGSGLGASENLGERCYSEAQRCDGSWDCADGTDEEGCPGCPPGHFPCGAAGTPGATACYLPADRCNYQTFCADGADERRCRHCQPGNFRCRDEKCVYETWVCDGQPDCTDGSDEWDCSYALPRKVITAAVIGSLVCGLLLVIALGCTCKLYAIRTQEYSIFAPLSRMEAEIVQQQAPPSYGQLIAQGAIPPVEDFPTENPNDNSVLGNLRSLLQILRQDMTPGGTSGGRRRQRGRSIRRLVRRLRRWGLLPRTNTPARAPETRSQVTPSVPSEALDDSTGQACEGGAVGGQDGEQAPPLPIKTPIPTPSTLPALATVSEPPGPLPSVPVESSLLSGVVQVLRGRLLPSLWSPGPTWTQTGTHTTVLSPEDEDDVLLLPLAEPEVWVVEAEDEPLLA.

The signal sequence occupies residues M1–A17. The Extracellular segment spans residues R18 to K441. 2 cysteine pairs are disulfide-bonded: C29–C58 and C81–C99. The CUB 1 domain occupies C29–D137. Residue N57 is glycosylated (N-linked (GlcNAc...) asparagine). N112 carries N-linked (GlcNAc...) asparagine glycosylation. One can recognise an LDL-receptor class A 1 domain in the interval L140–S176. Cystine bridges form between C141–C153, C148–C166, C160–C175, and C193–C221. The 114-residue stretch at C193–R306 folds into the CUB 2 domain. N-linked (GlcNAc...) asparagine glycosylation is found at N194 and N300. LDL-receptor class A domains are found at residues Y308 to P355, G356 to R398, and H399 to S435. 9 cysteine pairs are disulfide-bonded: C309-C332, C316-C345, C339-C354, C357-C375, C364-C388, C382-C397, C400-C412, C407-C425, and C419-C434. A helical transmembrane segment spans residues V442–G462. Over C463–A713 the chain is Cytoplasmic. The tract at residues L566–E636 is disordered. T596 is modified (phosphothreonine). The span at P614 to S626 shows a compositional bias: pro residues.

This sequence belongs to the LDLR family. As to expression, highly expressed in heart, lung, liver and liver. Expressed at low level in brain and spleen. Weakly or not expressed in testis and skeletal muscle. In liver, it is expressed in hepatocytes and at higher level in sinusoidal lining. In the kidney, it is expressed in peritubular capillaries. In brain, it is expressed in the epithelium of the choroid plexus ependymal cells of the third ventricle pia matter, and to lesser extent in hippocampal fields CA2 and CA3.

The protein localises to the membrane. It localises to the coated pit. In terms of biological role, probable receptor, which is involved in the internalization of lipophilic molecules and/or signal transduction. May be involved in the uptake of lipoprotein APOE in liver. The sequence is that of Low-density lipoprotein receptor-related protein 10 (Lrp10) from Mus musculus (Mouse).